The primary structure comprises 100 residues: Small ribosomal subunit protein uS14 (100 aa).

The protein belongs to the universal ribosomal protein uS14 family. Part of the 30S ribosomal subunit. Contacts proteins S3 and S10.

Binds 16S rRNA, required for the assembly of 30S particles and may also be responsible for determining the conformation of the 16S rRNA at the A site. This Rippkaea orientalis (strain PCC 8801 / RF-1) (Cyanothece sp. (strain PCC 8801)) protein is Small ribosomal subunit protein uS14.